The chain runs to 175 residues: Interleukin-10 (175 aa).

Positions 1–18 are cleaved as a signal peptide; the sequence is MPSSALLYCLIFLAGVAA. 2 cysteine pairs are disulfide-bonded: Cys26–Cys122 and Cys76–Cys128. N-linked (GlcNAc...) asparagine glycosylation is present at Asn130.

This sequence belongs to the IL-10 family. In terms of assembly, homodimer. Interacts with IL10RA and IL10RB.

It localises to the secreted. Its function is as follows. Major immune regulatory cytokine that acts on many cells of the immune system where it has profound anti-inflammatory functions, limiting excessive tissue disruption caused by inflammation. Mechanistically, IL10 binds to its heterotetrameric receptor comprising IL10RA and IL10RB leading to JAK1 and STAT2-mediated phosphorylation of STAT3. In turn, STAT3 translocates to the nucleus where it drives expression of anti-inflammatory mediators. Targets antigen-presenting cells (APCs) such as macrophages and monocytes and inhibits their release of pro-inflammatory cytokines including granulocyte-macrophage colony-stimulating factor /GM-CSF, granulocyte colony-stimulating factor/G-CSF, IL-1 alpha, IL-1 beta, IL-6, IL-8 and TNF-alpha. Also interferes with antigen presentation by reducing the expression of MHC-class II and co-stimulatory molecules, thereby inhibiting their ability to induce T cell activation. In addition, controls the inflammatory response of macrophages by reprogramming essential metabolic pathways including mTOR signaling. In Sus scrofa (Pig), this protein is Interleukin-10 (IL10).